The primary structure comprises 399 residues: L-asparaginase-like protein GG20738 (399 aa).

The first 22 residues, 1 to 22 (MLAQSCCLRLLILLLLCKSTCS), serve as a signal peptide directing secretion. 3 disulfides stabilise this stretch: cysteine 90-cysteine 95, cysteine 189-cysteine 205, and cysteine 344-cysteine 371.

It belongs to the Ntn-hydrolase family.

This Drosophila erecta (Fruit fly) protein is L-asparaginase-like protein GG20738.